We begin with the raw amino-acid sequence, 331 residues long: Pantothenate kinase (331 aa).

Residue 109–116 (GSVAVGKS) participates in ATP binding.

Belongs to the prokaryotic pantothenate kinase family.

It localises to the cytoplasm. It carries out the reaction (R)-pantothenate + ATP = (R)-4'-phosphopantothenate + ADP + H(+). The protein operates within cofactor biosynthesis; coenzyme A biosynthesis; CoA from (R)-pantothenate: step 1/5. The sequence is that of Pantothenate kinase from Sinorhizobium fredii (strain NBRC 101917 / NGR234).